Reading from the N-terminus, the 349-residue chain is MATSTTTSLKEFLSVFPQLVADLRALCLEEYQLPACVWDRFESTLNHNTLGGKCNRGLSVIDSVRLLRDGLELSPAEYFDAAVLGWLVELLQATMLVLDDIMDGSPTRRGKPSWYRVPGVGMAAVNDATMLESAIYMLLKKYFAGRAIYLPVVDLFHETALQIELGQAFDMLIANEGTPDLTTFVPATYSQIVTYKTAFYSFYLPVALALHAVDAATPTNLAAARAILVPMGEYFQVQDDYLDCFADPTVLGKVGTDIIEGKCSWLVVQALQRASTDQAQLLAENYGSASGESSVKALYSELDLESVYRTFEEQRVAELRTLITGLDESQGLRKSVFEELLGKIYQRRK.

Isopentenyl diphosphate is bound by residues lysine 53, arginine 56, and glutamine 92. The Mg(2+) site is built by aspartate 99 and aspartate 103. Arginine 108 is a dimethylallyl diphosphate binding site. Position 109 (arginine 109) interacts with isopentenyl diphosphate. Dimethylallyl diphosphate is bound by residues lysine 196, threonine 197, glutamine 236, lysine 253, and lysine 262.

Belongs to the FPP/GGPP synthase family. It depends on Mg(2+) as a cofactor.

It carries out the reaction isopentenyl diphosphate + dimethylallyl diphosphate = (2E)-geranyl diphosphate + diphosphate. The enzyme catalyses isopentenyl diphosphate + (2E)-geranyl diphosphate = (2E,6E)-farnesyl diphosphate + diphosphate. It participates in secondary metabolite biosynthesis; terpenoid biosynthesis. Its function is as follows. Farnesyl pyrophosphate synthase; part of the gene cluster that mediates the biosynthesis of viridicatumtoxin, a tetracycline-like fungal meroterpenoid with a unique, fused spirobicyclic ring system. The first step of the pathway is the production of the malonamoyl-CoA starter unit for the polyketide synthase vrtA. The aldolase vrtJ may be involved in the synthesis of the malonamate substrate for malonamoyl-CoA synthetase vrtB. The polyketide synthase vrtA then may utilize the malonamoyl-CoA starter unit, followed by sequential condensation of eight malonyl-CoA units to form the polyketide backbone. The cyclization of the last ring could be mediated by the lactamase-like protein vrtG. The proposed post-PKS tailoring steps are a hydroxylation at C5 catalyzed the cytochrome P450 monooxygenase vrtE, a hydroxylation at C12a catalyzed by VrtH and/or VrtI, and an O-methylation by the O-methyltransferase vrtF. VrtC is then proposed to catalyze the transfer of a geranyl group synthesized by vrtD to the aromatic C ring of the tetracyclic polyketide intermediate of viridicatumtoxin to yield previridicatumtoxin. Finally, the cytochrome P450 monooxygenase vrtK catalyzes the spirocyclization of the geranyl moiety of previridicatumtoxin to afford viridicatumtoxin. The protein is Farnesyl pyrophosphate synthase vrtD of Penicillium aethiopicum.